The following is a 918-amino-acid chain: Importin subunit beta-2 (918 aa).

18 HEAT repeats span residues 11-38 (YVLQ…EAME), 43-92 (QPEF…GGNN), 103-137 (YVKS…TYYR), 145-181 (GLQM…FQLE), 190-222 (EALL…TVIP), 235-263 (FLEI…SFLL), 275-303 (DGIV…FLHA), 320-413 (KDIV…MTNI), 421-449 (IAFP…GAMA), 461-488 (PALI…TLSR), 501-534 (LIPV…IENA), 542-577 (LFYS…AEKC), 583-620 (AMQI…SSLG), 628-678 (PEVY…GLGA), 694-725 (ILKI…YFFN), 777-814 (IDMS…LTHP), 825-858 (DSNW…INLT), and 867-900 (DTIH…SAQI). The tract at residues 361–395 (APRIVKKKEAGNGEDADDNEDDDDDDDDEDGDVDT) is disordered. Residues 372-393 (NGEDADDNEDDDDDDDDEDGDV) are compositionally biased toward acidic residues.

This sequence belongs to the importin beta family. Importin beta-2 subfamily. In terms of assembly, interacts with Ran (GSP1); interacts specifically with the GTP-bound form of Ran (GTP-Ran), protecting it from GTP hydrolysis and nucleotide exchange. Interacts with nucleoporins NUP1, NUP100 and NUP116. Interacts with NAB2 and HRP1/NAB4; via their rg-NLS. Interacts with TFG2; via its PY-NLS.

It is found in the cytoplasm. Its subcellular location is the nucleus. The protein resides in the nuclear pore complex. Functions in nuclear protein import as nuclear transport receptor. Serves as receptor for arginine/glycine-rich nuclear localization signals (rg-NLS) and PY-NLS in cargo substrates. Its predominant cargo substrate seems to be mRNA-binding proteins. Required for nuclear transport of NAB2, HRP1/NAB4 and TFG2. Mediates docking of the importin/substrate complex to the nuclear pore complex (NPC) through binding to repeat-containing nucleoporins. The complex is subsequently translocated through the pore by an energy requiring, Ran-dependent mechanism. At the nucleoplasmic side of the NPC, GTP-Ran binding leads to release of the cargo. Efficient GTP-Ran-mediated substrate release requires RNA. The importin is re-exported from the nucleus to the cytoplasm where GTP hydrolysis releases Ran from importin. The directionality of nuclear import is thought to be conferred by an asymmetric distribution of the GTP- and GDP-bound forms of Ran between the cytoplasm and nucleus. This Saccharomyces cerevisiae (strain ATCC 204508 / S288c) (Baker's yeast) protein is Importin subunit beta-2.